The primary structure comprises 867 residues: DNA mismatch repair protein MutS (867 aa).

ATP is bound at residue 609 to 616 (GPNMSGKS).

The protein belongs to the DNA mismatch repair MutS family.

Functionally, this protein is involved in the repair of mismatches in DNA. It is possible that it carries out the mismatch recognition step. This protein has a weak ATPase activity. This Latilactobacillus sakei subsp. sakei (strain 23K) (Lactobacillus sakei subsp. sakei) protein is DNA mismatch repair protein MutS.